The following is a 290-amino-acid chain: Glycine--tRNA ligase alpha subunit (290 aa).

It belongs to the class-II aminoacyl-tRNA synthetase family. In terms of assembly, tetramer of two alpha and two beta subunits.

The protein localises to the cytoplasm. The catalysed reaction is tRNA(Gly) + glycine + ATP = glycyl-tRNA(Gly) + AMP + diphosphate. This is Glycine--tRNA ligase alpha subunit from Maridesulfovibrio salexigens (strain ATCC 14822 / DSM 2638 / NCIMB 8403 / VKM B-1763) (Desulfovibrio salexigens).